Here is a 266-residue protein sequence, read N- to C-terminus: Chymotrypsin-like elastase family member 1 (266 aa).

The N-terminal stretch at 1-16 is a signal peptide; that stretch reads MLRFLVFATLVLYGHS. Positions 17-26 are cleaved as a propeptide — activation peptide; that stretch reads TQDFPETNAR. The Peptidase S1 domain maps to 27-264; sequence VVGGTEAGRN…YISWINKTIA (238 aa). An intrachain disulfide couples Cys56 to Cys72. The Charge relay system role is filled by His71. The Ca(2+) site is built by Asp85, Asn87, Gln90, and Glu95. The N-linked (GlcNAc...) asparagine glycan is linked to Asn87. The active-site Charge relay system is the Asp119. 3 disulfides stabilise this stretch: Cys153–Cys220, Cys184–Cys200, and Cys210–Cys240. Catalysis depends on Ser214, which acts as the Charge relay system. N-linked (GlcNAc...) asparagine glycans are attached at residues Asn241 and Asn260.

The protein belongs to the peptidase S1 family. Elastase subfamily. The cofactor is Ca(2+).

The protein resides in the secreted. The enzyme catalyses Hydrolysis of proteins, including elastin. Preferential cleavage: Ala-|-Xaa.. Its function is as follows. Serine proteases that hydrolyze many proteins in addition to elastin. In Macaca fascicularis (Crab-eating macaque), this protein is Chymotrypsin-like elastase family member 1 (CELA1).